The sequence spans 255 residues: MTVRVRVIPCLDVADGRVVKGVNFVDLRDAGDPVEAARAYDAAGADELCFLDISASHQGRGTLLDLVSRTAEVCFMPLTVGGGVRSAEDARALLLAGADKVAVNSAAVARPELVADIADRFGSQCAVGSIDARRVEDGRWEIFTHGGRKPTGIDAVEHAVRLATLGAGELLVTSMDRDGTRDGYDLALTRAIADAVSVPVIASGGVGNLDHLVAGVIEGGASAVLAASIFHFGEATIAEAHARLAAAGLPVRSPI.

Catalysis depends on residues aspartate 12 and aspartate 131.

It belongs to the HisA/HisF family. In terms of assembly, heterodimer of HisH and HisF.

The protein localises to the cytoplasm. It carries out the reaction 5-[(5-phospho-1-deoxy-D-ribulos-1-ylimino)methylamino]-1-(5-phospho-beta-D-ribosyl)imidazole-4-carboxamide + L-glutamine = D-erythro-1-(imidazol-4-yl)glycerol 3-phosphate + 5-amino-1-(5-phospho-beta-D-ribosyl)imidazole-4-carboxamide + L-glutamate + H(+). The protein operates within amino-acid biosynthesis; L-histidine biosynthesis; L-histidine from 5-phospho-alpha-D-ribose 1-diphosphate: step 5/9. Its function is as follows. IGPS catalyzes the conversion of PRFAR and glutamine to IGP, AICAR and glutamate. The HisF subunit catalyzes the cyclization activity that produces IGP and AICAR from PRFAR using the ammonia provided by the HisH subunit. This is Imidazole glycerol phosphate synthase subunit HisF from Sphingopyxis alaskensis (strain DSM 13593 / LMG 18877 / RB2256) (Sphingomonas alaskensis).